The chain runs to 151 residues: Mitochondrial intermembrane space import and assembly protein 40 homolog (151 aa).

Residues 1–35 form a disordered region; the sequence is MGQGLSQPAQAVEEPSPPAVEAAPSSSPSPAPAPS. Positions 7 to 26 are enriched in low complexity; the sequence is QPAQAVEEPSPPAVEAAPSS. Cystine bridges form between C65–C67, C76–C109, and C86–C99. The 45-residue stretch at 73-117 folds into the CHCH domain; it reads NGPCGSQFVDAFSCFLKSTEEEKGSDCVKPFIALQDCIKINPEAF. 2 consecutive short sequence motifs (cx9C motif) follow at residues 76-86 and 99-109; these read CGSQFVDAFSC and CVKPFIALQDC. The disordered stretch occupies residues 123 to 151; the sequence is EEEENDEEAEKSNLKVRAPAWSRESKPKL.

The protein resides in the mitochondrion intermembrane space. It localises to the peroxisome matrix. Functionally, required for the import and folding of small cysteine-containing proteins in the mitochondrial intermembrane space. The polypeptide is Mitochondrial intermembrane space import and assembly protein 40 homolog (Oryza sativa subsp. japonica (Rice)).